Consider the following 218-residue polypeptide: Pyridoxine/pyridoxamine 5'-phosphate oxidase (218 aa).

Residues 12–15 and Arg70 contribute to the substrate site; that span reads RLSY. Residues 65 to 70, 80 to 81, Lys87, and Gln109 each bind FMN; these read RTVLLR and YT. Substrate contacts are provided by Tyr127, Arg131, and Ser135. Residues 145–146 and Trp191 each bind FMN; that span reads QS. 197–199 provides a ligand contact to substrate; that stretch reads RLH. Residue Arg201 participates in FMN binding.

It belongs to the pyridoxamine 5'-phosphate oxidase family. Homodimer. It depends on FMN as a cofactor.

The catalysed reaction is pyridoxamine 5'-phosphate + O2 + H2O = pyridoxal 5'-phosphate + H2O2 + NH4(+). The enzyme catalyses pyridoxine 5'-phosphate + O2 = pyridoxal 5'-phosphate + H2O2. Its pathway is cofactor metabolism; pyridoxal 5'-phosphate salvage; pyridoxal 5'-phosphate from pyridoxamine 5'-phosphate: step 1/1. The protein operates within cofactor metabolism; pyridoxal 5'-phosphate salvage; pyridoxal 5'-phosphate from pyridoxine 5'-phosphate: step 1/1. Its function is as follows. Catalyzes the oxidation of either pyridoxine 5'-phosphate (PNP) or pyridoxamine 5'-phosphate (PMP) into pyridoxal 5'-phosphate (PLP). This is Pyridoxine/pyridoxamine 5'-phosphate oxidase from Acinetobacter baumannii (strain AB0057).